Consider the following 253-residue polypeptide: Indole-3-glycerol phosphate synthase (253 aa).

Belongs to the TrpC family.

It carries out the reaction 1-(2-carboxyphenylamino)-1-deoxy-D-ribulose 5-phosphate + H(+) = (1S,2R)-1-C-(indol-3-yl)glycerol 3-phosphate + CO2 + H2O. Its pathway is amino-acid biosynthesis; L-tryptophan biosynthesis; L-tryptophan from chorismate: step 4/5. This Bacillus mycoides (strain KBAB4) (Bacillus weihenstephanensis) protein is Indole-3-glycerol phosphate synthase.